The primary structure comprises 192 residues: Ion-translocating oxidoreductase complex subunit B (192 aa).

A hydrophobic region spans residues 1–26 (MNTIWIAVGALTLLGLVFGAILGYAS). The 4Fe-4S domain occupies 32-91 (EDDPVVEKIDAILPQSQCGQCGYPGCRPYAEAVGLQGEKINRCAPGGEAVMLKMAELLNV). 12 residues coordinate [4Fe-4S] cluster: cysteine 49, cysteine 52, cysteine 57, cysteine 74, cysteine 117, cysteine 120, cysteine 123, cysteine 127, cysteine 147, cysteine 150, cysteine 153, and cysteine 157. 2 consecutive 4Fe-4S ferredoxin-type domains span residues 108-137 (MLAVIDENNCIGCTKCIQACPVDAIVGATR) and 138-167 (AMHTVMSDLCTGCNLCVDPCPTHCIELRPV).

The protein belongs to the 4Fe4S bacterial-type ferredoxin family. RnfB subfamily. In terms of assembly, the complex is composed of six subunits: RsxA, RsxB, RsxC, RsxD, RsxE and RsxG. Requires [4Fe-4S] cluster as cofactor.

The protein resides in the cell inner membrane. Its function is as follows. Part of a membrane-bound complex that couples electron transfer with translocation of ions across the membrane. Required to maintain the reduced state of SoxR. This is Ion-translocating oxidoreductase complex subunit B from Salmonella agona (strain SL483).